A 338-amino-acid polypeptide reads, in one-letter code: Ketol-acid reductoisomerase (NADP(+)) (338 aa).

One can recognise a KARI N-terminal Rossmann domain in the interval Met-1–Thr-181. NADP(+)-binding positions include Tyr-24–Gln-27, Arg-47, and Ser-52. His-107 is a catalytic residue. Gly-133 contacts NADP(+). Positions Asn-182 to Ile-327 constitute a KARI C-terminal knotted domain. Mg(2+)-binding residues include Asp-190, Glu-194, Glu-226, and Glu-230. Ser-251 is a substrate binding site.

This sequence belongs to the ketol-acid reductoisomerase family. Mg(2+) is required as a cofactor.

It carries out the reaction (2R)-2,3-dihydroxy-3-methylbutanoate + NADP(+) = (2S)-2-acetolactate + NADPH + H(+). The enzyme catalyses (2R,3R)-2,3-dihydroxy-3-methylpentanoate + NADP(+) = (S)-2-ethyl-2-hydroxy-3-oxobutanoate + NADPH + H(+). Its pathway is amino-acid biosynthesis; L-isoleucine biosynthesis; L-isoleucine from 2-oxobutanoate: step 2/4. It participates in amino-acid biosynthesis; L-valine biosynthesis; L-valine from pyruvate: step 2/4. In terms of biological role, involved in the biosynthesis of branched-chain amino acids (BCAA). Catalyzes an alkyl-migration followed by a ketol-acid reduction of (S)-2-acetolactate (S2AL) to yield (R)-2,3-dihydroxy-isovalerate. In the isomerase reaction, S2AL is rearranged via a Mg-dependent methyl migration to produce 3-hydroxy-3-methyl-2-ketobutyrate (HMKB). In the reductase reaction, this 2-ketoacid undergoes a metal-dependent reduction by NADPH to yield (R)-2,3-dihydroxy-isovalerate. This chain is Ketol-acid reductoisomerase (NADP(+)), found in Acidovorax ebreus (strain TPSY) (Diaphorobacter sp. (strain TPSY)).